The sequence spans 495 residues: ATP synthase subunit beta, chloroplastic (495 aa).

Residue 172–179 coordinates ATP; the sequence is GGAGVGKT.

The protein belongs to the ATPase alpha/beta chains family. As to quaternary structure, F-type ATPases have 2 components, CF(1) - the catalytic core - and CF(0) - the membrane proton channel. CF(1) has five subunits: alpha(3), beta(3), gamma(1), delta(1), epsilon(1). CF(0) has four main subunits: a(1), b(1), b'(1) and c(9-12).

It is found in the plastid. The protein localises to the chloroplast thylakoid membrane. It catalyses the reaction ATP + H2O + 4 H(+)(in) = ADP + phosphate + 5 H(+)(out). In terms of biological role, produces ATP from ADP in the presence of a proton gradient across the membrane. The catalytic sites are hosted primarily by the beta subunits. The sequence is that of ATP synthase subunit beta, chloroplastic from Hyacinthoides non-scripta (English bluebell).